A 338-amino-acid polypeptide reads, in one-letter code: Ketol-acid reductoisomerase (NADP(+)) (338 aa).

The KARI N-terminal Rossmann domain occupies 1–181 (MKVFYDKDAD…GGGRAGIIET (181 aa)). Residues 24 to 27 (YGSQ), Arg47, and Ser52 contribute to the NADP(+) site. His107 is an active-site residue. Gly133 serves as a coordination point for NADP(+). The region spanning 182 to 327 (NFREETETDL…GKLRAMMPWI (146 aa)) is the KARI C-terminal knotted domain. Positions 190, 194, 226, and 230 each coordinate Mg(2+). Residue Ser251 participates in substrate binding.

The protein belongs to the ketol-acid reductoisomerase family. It depends on Mg(2+) as a cofactor.

The catalysed reaction is (2R)-2,3-dihydroxy-3-methylbutanoate + NADP(+) = (2S)-2-acetolactate + NADPH + H(+). The enzyme catalyses (2R,3R)-2,3-dihydroxy-3-methylpentanoate + NADP(+) = (S)-2-ethyl-2-hydroxy-3-oxobutanoate + NADPH + H(+). Its pathway is amino-acid biosynthesis; L-isoleucine biosynthesis; L-isoleucine from 2-oxobutanoate: step 2/4. The protein operates within amino-acid biosynthesis; L-valine biosynthesis; L-valine from pyruvate: step 2/4. Functionally, involved in the biosynthesis of branched-chain amino acids (BCAA). Catalyzes an alkyl-migration followed by a ketol-acid reduction of (S)-2-acetolactate (S2AL) to yield (R)-2,3-dihydroxy-isovalerate. In the isomerase reaction, S2AL is rearranged via a Mg-dependent methyl migration to produce 3-hydroxy-3-methyl-2-ketobutyrate (HMKB). In the reductase reaction, this 2-ketoacid undergoes a metal-dependent reduction by NADPH to yield (R)-2,3-dihydroxy-isovalerate. The protein is Ketol-acid reductoisomerase (NADP(+)) of Cupriavidus metallidurans (strain ATCC 43123 / DSM 2839 / NBRC 102507 / CH34) (Ralstonia metallidurans).